The chain runs to 157 residues: Protein Smg homolog (157 aa).

Belongs to the Smg family.

The chain is Protein Smg homolog from Tolumonas auensis (strain DSM 9187 / NBRC 110442 / TA 4).